The primary structure comprises 221 residues: Small ribosomal subunit protein uS3 (221 aa).

The region spanning 39-107 (IREYIKRKLY…QVHVNIVEVK (69 aa)) is the KH type-2 domain.

The protein belongs to the universal ribosomal protein uS3 family. In terms of assembly, part of the 30S ribosomal subunit. Forms a tight complex with proteins S10 and S14.

Binds the lower part of the 30S subunit head. Binds mRNA in the 70S ribosome, positioning it for translation. This Desulforamulus reducens (strain ATCC BAA-1160 / DSM 100696 / MI-1) (Desulfotomaculum reducens) protein is Small ribosomal subunit protein uS3.